Reading from the N-terminus, the 354-residue chain is DNA polymerase IV (354 aa).

The 185-residue stretch at 14 to 198 (IIHIDMDAFF…MDIAKFHGVG (185 aa)) folds into the UmuC domain. Mg(2+) is bound by residues aspartate 18 and aspartate 116. The active site involves glutamate 117.

It belongs to the DNA polymerase type-Y family. Monomer. Mg(2+) serves as cofactor.

Its subcellular location is the cytoplasm. The catalysed reaction is DNA(n) + a 2'-deoxyribonucleoside 5'-triphosphate = DNA(n+1) + diphosphate. In terms of biological role, poorly processive, error-prone DNA polymerase involved in untargeted mutagenesis. Copies undamaged DNA at stalled replication forks, which arise in vivo from mismatched or misaligned primer ends. These misaligned primers can be extended by PolIV. Exhibits no 3'-5' exonuclease (proofreading) activity. May be involved in translesional synthesis, in conjunction with the beta clamp from PolIII. The sequence is that of DNA polymerase IV from Streptococcus gordonii (strain Challis / ATCC 35105 / BCRC 15272 / CH1 / DL1 / V288).